A 176-amino-acid polypeptide reads, in one-letter code: Putative metal-dependent hydrolase BLi00869/BLi00870/BL03027 (176 aa).

3 residues coordinate Zn(2+): histidine 65, histidine 158, and histidine 162.

The protein belongs to the metal hydrolase YfiT family. As to quaternary structure, homodimer. It depends on Zn(2+) as a cofactor.

It localises to the cytoplasm. In terms of biological role, possible metal-dependent hydrolase. This is Putative metal-dependent hydrolase BLi00869/BLi00870/BL03027 from Bacillus licheniformis (strain ATCC 14580 / DSM 13 / JCM 2505 / CCUG 7422 / NBRC 12200 / NCIMB 9375 / NCTC 10341 / NRRL NRS-1264 / Gibson 46).